The following is a 412-amino-acid chain: MKIYLVGGAVRDALLGLPVKDRDWVVVGSTPQEMLDAGYQQVGRDFPVFLHPQTHEEYALARTERKSGSGYTGFTCYAAPDVTLEDDLKRRDLTINALAQDDNGEIIDPYNGLGDLQNRLLRHVSPAFGEDPLRVLRVARFAARYAHLCFRIADETLALMREMTHAGELEHLTPERVWKETENALTTRNPQVFFQVLRDCGALRVLFPEIDALFGVPAPARWHPEIDTGIHTLMTLSMAAMLSPQVDVRFATLCHDLGKGLTPPELWPRHHGHGPAGVKLVEQLCQRLRVPNEIRDLARLVAEFHDLIHTFPMLNPKTIVKLFDSIDAWRKPQRVEQLALTSEADVRGRTGFESADYPQGRWLREAWEVAQSVPTKAVVEAGFKGVEIREELTRRRIAAVAGWKEQRCPKPE.

Residues Gly8 and Arg11 each contribute to the ATP site. CTP contacts are provided by Gly8 and Arg11. The Mg(2+) site is built by Asp21 and Asp23. Arg91, Arg137, and Arg140 together coordinate ATP. CTP-binding residues include Arg91, Arg137, and Arg140. Residues 228–329 (TGIHTLMTLS…VKLFDSIDAW (102 aa)) enclose the HD domain.

This sequence belongs to the tRNA nucleotidyltransferase/poly(A) polymerase family. Bacterial CCA-adding enzyme type 1 subfamily. In terms of assembly, monomer. Can also form homodimers and oligomers. Requires Mg(2+) as cofactor. Ni(2+) is required as a cofactor.

The enzyme catalyses a tRNA precursor + 2 CTP + ATP = a tRNA with a 3' CCA end + 3 diphosphate. The catalysed reaction is a tRNA with a 3' CCA end + 2 CTP + ATP = a tRNA with a 3' CCACCA end + 3 diphosphate. Functionally, catalyzes the addition and repair of the essential 3'-terminal CCA sequence in tRNAs without using a nucleic acid template. Adds these three nucleotides in the order of C, C, and A to the tRNA nucleotide-73, using CTP and ATP as substrates and producing inorganic pyrophosphate. tRNA 3'-terminal CCA addition is required both for tRNA processing and repair. Also involved in tRNA surveillance by mediating tandem CCA addition to generate a CCACCA at the 3' terminus of unstable tRNAs. While stable tRNAs receive only 3'-terminal CCA, unstable tRNAs are marked with CCACCA and rapidly degraded. This chain is Multifunctional CCA protein, found in Escherichia coli O1:K1 / APEC.